The following is a 454-amino-acid chain: Toluate 1,2-dioxygenase subunit alpha (454 aa).

One can recognise a Rieske domain in the interval I51 to L148. 4 residues coordinate [2Fe-2S] cluster: C92, H94, C112, and H115. H221 and H226 together coordinate Fe cation.

It belongs to the bacterial ring-hydroxylating dioxygenase alpha subunit family. In terms of assembly, this dioxygenase system consists of three proteins: the two subunits of the hydroxylase component (XylX and XylY), and an electron transfer component (XylZ). Requires [2Fe-2S] cluster as cofactor. Fe cation is required as a cofactor.

It participates in xenobiotic degradation; toluene degradation. The sequence is that of Toluate 1,2-dioxygenase subunit alpha (xylX) from Pseudomonas putida (Arthrobacter siderocapsulatus).